A 196-amino-acid chain; its full sequence is UMP-CMP kinase (196 aa).

13 to 18 (GAGKGT) lines the ATP pocket. An NMP region spans residues 33–63 (SAGDLLREERSRTDSEFGQLIDSYIKEGKIV). A ribonucleoside 5'-phosphate contacts are provided by residues arginine 39, 61 to 63 (KIV), and 93 to 96 (GFPR). CMP is bound at residue asparagine 100. The segment at 133–143 (ERGKSSGRTDD) is LID. Residue arginine 134 coordinates ATP. Arginine 140 and arginine 151 together coordinate a ribonucleoside 5'-phosphate. Residue arginine 179 coordinates ATP.

This sequence belongs to the adenylate kinase family. UMP-CMP kinase subfamily. Monomer. The cofactor is Mg(2+).

The protein localises to the nucleus. Its subcellular location is the cytoplasm. It carries out the reaction CMP + ATP = CDP + ADP. It catalyses the reaction dCMP + ATP = dCDP + ADP. The enzyme catalyses UMP + ATP = UDP + ADP. The catalysed reaction is a 2'-deoxyribonucleoside 5'-diphosphate + ATP = a 2'-deoxyribonucleoside 5'-triphosphate + ADP. It carries out the reaction a ribonucleoside 5'-diphosphate + ATP = a ribonucleoside 5'-triphosphate + ADP. Catalyzes the phosphorylation of pyrimidine nucleoside monophosphates at the expense of ATP. Plays an important role in de novo pyrimidine nucleotide biosynthesis. Has preference for UMP and CMP as phosphate acceptors. Also displays broad nucleoside diphosphate kinase activity. This is UMP-CMP kinase (cmpk) from Danio rerio (Zebrafish).